A 77-amino-acid chain; its full sequence is Conotoxin VnMEKL-023 (77 aa).

A signal peptide spans 1 to 19 (MQKLTILLLVAAVLMSTQA). Positions 20 to 37 (LIKGGGEKRPKEKIRFLS) are excised as a propeptide. 3 cysteine pairs are disulfide-bonded: cysteine 51–cysteine 65, cysteine 58–cysteine 69, and cysteine 64–cysteine 74.

The protein belongs to the conotoxin O2 superfamily. In terms of tissue distribution, expressed by the venom duct.

It localises to the secreted. The chain is Conotoxin VnMEKL-023 from Conus ventricosus (Mediterranean cone).